Consider the following 193-residue polypeptide: Copper-binding lipoprotein NosL (193 aa).

The N-terminal stretch at 1 to 19 is a signal peptide; sequence MRTRLRFVLVAAALALLSA. C20 is lipidated: N-palmitoyl cysteine. C20 is lipidated: S-diacylglycerol cysteine.

It belongs to the NosL family. As to quaternary structure, monomer. Apo-NosL can form homodimers.

It is found in the cell membrane. Its function is as follows. May act as a metallochaperone involved in nitrous oxide reductase assembly. Specifically binds Cu(+). The sequence is that of Copper-binding lipoprotein NosL from Achromobacter cycloclastes.